Consider the following 437-residue polypeptide: CMP-5'-(3-aminopropyl)phosphonate hydroxylase (437 aa).

FAD serves as cofactor.

It catalyses the reaction CMP-5'-(3-aminopropyl)phosphonate + NADPH + O2 = CMP-5'-(N-hydroxy-3-aminopropyl)phosphonate + NADP(+) + H2O. The protein operates within antibiotic biosynthesis. In terms of biological role, hydroxylase involved in the biosynthesis of the phosphonate antibiotic FR-900098, a potent antimalarial agent that acts as an inhibitor of 1-deoxy-D-xylulose 5-phosphate reductoisomerase (DXR), the first enzyme in the nonmevalonate pathway for isoprenoid biosynthesis. Catalyzes the N-hydroxylation of CMP-5'-3-aminopropylphosphonate (CMP-5'-3APn) to CMP-5'-(N-hydroxy-3-aminopropyl)phosphonate (CMP-5'-H3APn). Cannot use CMP-5'-N-acetyl-3-aminopropylphosphonate (CMP-5'-Ac3APn) as a substrate. The protein is CMP-5'-(3-aminopropyl)phosphonate hydroxylase of Streptomyces rubellomurinus (strain ATCC 31215).